The following is a 654-amino-acid chain: MIVRLFWLAVLWLALANANPLKRLNHVWSQRGVAKDDFLVTSLPGLSENIASDDVPLMFAGQLELYPENNTHYFFWKFSDQKKEPEAANRTIFWLNGGPGCSSMDGALMEAGPLRIGKDYKVQLNEGSWHRKGDVVFVDQPAGTGFSYSRDYDVELYQIEYHFLQFLKKYFELFPEDAHNDIVLAGESYAGQYIPYIAHGILERNKKLADGESPYHLKGLAIGNGWISPNEQSLSFVPFAVQAGLVSQKDPGWKAILQQHMKCQDLVAASHEDDTFGANSVVDKECEKVLNTILYELVDHSASQYEQCINMYDYTLRDSFPSCGMNWPPDLSNVNHFLKSDEVMSSLNLVQQISWTECSEHVGKQMKARHSKPAITLFADLLAEVEILLFHGNRDIICNYMGAESMIKKLHWGGQTGFSADSPVLKWFHGDEEAGYVKSERNLTFVNVFDASHMVPFDKPEVSSALVDILFKRFTVADDKLQTQAKKTNANQNDSPSASENDNESGRTSESASSSPSESAATETESHATRIVRLIQLAVIIILIWGLCAIYSTYRSKPTSIIKTKPSGRKKNVQWADLMPQEEPAPKGFLSKTLNKLSRTEHKYVPVDIELGPTDGMDDASSDSGPSNVGTAETPEFVIASDDEENAHEHTEEH.

Positions 1-18 (MIVRLFWLAVLWLALANA) are cleaved as a signal peptide. Residues 19–533 (NPLKRLNHVW…TESHATRIVR (515 aa)) are Lumenal-facing. Residues Asn-69 and Asn-89 are each glycosylated (N-linked (GlcNAc...) asparagine). Residues Ser-188 and Asp-395 contribute to the active site. Asn-442 carries an N-linked (GlcNAc...) asparagine glycan. His-453 is a catalytic residue. The segment covering 484–500 (QAKKTNANQNDSPSASE) has biased composition (polar residues). The tract at residues 484 to 526 (QAKKTNANQNDSPSASENDNESGRTSESASSSPSESAATETES) is disordered. Asn-503 carries an N-linked (GlcNAc...) asparagine glycan. Residues 508 to 523 (TSESASSSPSESAATE) show a composition bias toward low complexity. Residues 534-554 (LIQLAVIIILIWGLCAIYSTY) traverse the membrane as a helical segment. Topologically, residues 555–654 (RSKPTSIIKT…ENAHEHTEEH (100 aa)) are cytoplasmic. The tract at residues 606–654 (PVDIELGPTDGMDDASSDSGPSNVGTAETPEFVIASDDEENAHEHTEEH) is disordered. The span at 622–631 (SDSGPSNVGT) shows a compositional bias: polar residues.

This sequence belongs to the peptidase S10 family.

The protein resides in the golgi apparatus. It is found in the trans-Golgi network membrane. It carries out the reaction Preferential release of a C-terminal arginine or lysine residue.. In terms of biological role, protease with a carboxypeptidase B-like function involved in the C-terminal processing of the lysine and arginine residues from protein precursors. Promotes cell fusion and is involved in the programmed cell death. The sequence is that of Pheromone-processing carboxypeptidase KEX1 (KEX1) from Clavispora lusitaniae (strain ATCC 42720) (Yeast).